Here is a 707-residue protein sequence, read N- to C-terminus: Eomesodermin homolog (707 aa).

The span at 27–42 (GGGGGGGGGGGGGGGS) shows a compositional bias: gly residues. Residues 27-125 (GGGGGGGGGG…GSPCAEEELP (99 aa)) form a disordered region. A compositionally biased stretch (low complexity) spans 73-93 (AGSAEPAGAGAGAPAAMLSDA). Ser117 carries the post-translational modification Phosphoserine. The T-box DNA-binding region spans 278–458 (LWLKFHRHQT…HNPFAKGFRD (181 aa)). The residue at position 473 (Thr473) is a Phosphothreonine. Residues 592 to 707 (AMAGWGGRGA…GAYYAFYTSP (116 aa)) form a required for transcription activation region. The tract at residues 642–689 (TPPSIKSLDSSDSGVYNSACKRKRLSPSTPSNGNSPPIKCEDINTEEY) is disordered. Positions 648–657 (SLDSSDSGVY) are enriched in polar residues. Residues 667–678 (SPSTPSNGNSPP) are compositionally biased toward low complexity. Positions 680-689 (KCEDINTEEY) are enriched in basic and acidic residues.

As to expression, expressed in CD8+ T-cells.

The protein localises to the nucleus. In terms of biological role, functions as a transcriptional activator playing a crucial role during development. Functions in trophoblast differentiation and later in gastrulation, regulating both mesoderm delamination and endoderm specification. Plays a role in brain development being required for the specification and the proliferation of the intermediate progenitor cells and their progeny in the cerebral cortex. Required for differentiation and migration of unipolar dendritic brush cells. Also involved in the differentiation of CD8+ T-cells during immune response regulating the expression of lytic effector genes. In Mus musculus (Mouse), this protein is Eomesodermin homolog (Eomes).